We begin with the raw amino-acid sequence, 163 residues long: Transcriptional repressor NrdR (163 aa).

Residues 3–34 (CPSCNSESSRVVDSRSIEMGVSIRRRRECSEC) fold into a zinc finger. The 91-residue stretch at 46–136 (LLVVKRNGVT…VYKSFNCAED (91 aa)) folds into the ATP-cone domain.

Belongs to the NrdR family. It depends on Zn(2+) as a cofactor.

In terms of biological role, negatively regulates transcription of bacterial ribonucleotide reductase nrd genes and operons by binding to NrdR-boxes. The protein is Transcriptional repressor NrdR of Corynebacterium jeikeium (strain K411).